The following is a 384-amino-acid chain: Trophoblast glycoprotein-like (384 aa).

The signal sequence occupies residues 1 to 30 (MAPRAGQRGLWSPLPGLLLLAAALSRPAAP). Intrachain disulfides connect Cys31-Cys37 and Cys35-Cys47. The Extracellular portion of the chain corresponds to 31 to 309 (CPFQCYCFGS…DVAGPELEAS (279 aa)). 5 LRR repeats span residues 61–84 (PPDA…AFAG), 95–118 (LPLL…AFDG), 119–142 (LPSL…AFRG), 173–196 (LAEL…ALRL), and 198–219 (RLEQ…ELSA). N-linked (GlcNAc...) asparagine glycosylation occurs at Asn66. Intrachain disulfides connect Cys240–Cys266 and Cys242–Cys287. A helical membrane pass occupies residues 310–330 (YVFFGLVLALIGLIFLMVLYL). Residues 331-384 (NRRGIQRWMHNLREACRDQMEGYHYRYEQDADPRRAPAPAAPAGSRATSPGSGL) are Cytoplasmic-facing. The disordered stretch occupies residues 361-384 (ADPRRAPAPAAPAGSRATSPGSGL). The segment covering 367–384 (PAPAAPAGSRATSPGSGL) has biased composition (low complexity).

The protein resides in the membrane. The sequence is that of Trophoblast glycoprotein-like (Tpbgl) from Mus musculus (Mouse).